Here is a 244-residue protein sequence, read N- to C-terminus: Guanine nucleotide exchange factor rei-1 (244 aa).

2 coiled-coil regions span residues 6–39 and 81–144; these read DQLI…KKQF and VQQA…KAEK. The segment at 221–244 is disordered; that stretch reads DQIHQERSSQSSLAPSSDAESDSS. Residues 228-238 show a composition bias toward low complexity; that stretch reads SSQSSLAPSSD.

It belongs to the SH3BP5 family. In terms of assembly, homodimer, tetramer and multimer. Interacts with rab-11.1. Binds preferentially to the GDP-bound form of rab-11.1. As to expression, expressed in germ cells.

The protein resides in the cytoplasmic granule. It localises to the golgi apparatus membrane. Its function is as follows. Guanine nucleotide exchange factor for Rab GTPase Rab-11.1. Spatially and temporally regulates the distribution of Rab-11.1 to target membranes during embryogenesis. Plays a role in cytokinesis, probably by targeting rab-11.1 to the cleavage furrows. The sequence is that of Guanine nucleotide exchange factor rei-1 from Caenorhabditis elegans.